A 93-amino-acid polypeptide reads, in one-letter code: ATP synthase subunit c (93 aa).

2 helical membrane passes run Ala-13–Ile-33 and Ile-58–Leu-78.

The protein belongs to the ATPase C chain family. In terms of assembly, F-type ATPases have 2 components, F(1) - the catalytic core - and F(0) - the membrane proton channel. F(1) has five subunits: alpha(3), beta(3), gamma(1), delta(1), epsilon(1). F(0) has three main subunits: a(1), b(2) and c(10-14). The alpha and beta chains form an alternating ring which encloses part of the gamma chain. F(1) is attached to F(0) by a central stalk formed by the gamma and epsilon chains, while a peripheral stalk is formed by the delta and b chains.

It localises to the cell inner membrane. Its function is as follows. F(1)F(0) ATP synthase produces ATP from ADP in the presence of a proton or sodium gradient. F-type ATPases consist of two structural domains, F(1) containing the extramembraneous catalytic core and F(0) containing the membrane proton channel, linked together by a central stalk and a peripheral stalk. During catalysis, ATP synthesis in the catalytic domain of F(1) is coupled via a rotary mechanism of the central stalk subunits to proton translocation. Key component of the F(0) channel; it plays a direct role in translocation across the membrane. A homomeric c-ring of between 10-14 subunits forms the central stalk rotor element with the F(1) delta and epsilon subunits. This Campylobacter hominis (strain ATCC BAA-381 / DSM 21671 / CCUG 45161 / LMG 19568 / NCTC 13146 / CH001A) protein is ATP synthase subunit c.